Reading from the N-terminus, the 589-residue chain is MLLGLLVLSLAFQGTLAVTECEECKSIVDLLQFEWGEKKTEECVMEIAVFICETFHIEDNDVCNFIISDFSDEFMYVIKQILVTPHQLCGLLMKNDCGDFVDPLATIWNMTIPGNQPPFVPKQVVPPGNPTLRALHLTDLHVDMFYTVGLEADCGTPQCCRPQDMNVEIVENGDVKQPAGPWGSVGSCDTPYWLLTNMLQNIASTAGKLDYIMVSGDLVSHTVWAYTPETHSFMVKNLSDTIRSYFPKTPVYFAVGNHEGVPVDNIAPHFTPKKYHMDWLYKAMSNAWQGWIPADQEKSLEYNGCYMKKIYDGLRMISLNNVYGDRINFWLYINQTDPDGTLQWLINQLQDAENVGDKVHIVAHIPGSDGEALEGYALNYYKIINRYANTVVGQFFGHTHSEKFYMMYANPDDYKSTPTNVVYSAPSVTPYSDYFPAYRIYTIDGVHKGSTYQVIDYEEWFFNLTSNNANPTNVKWEVLYQSANMEYGLKGQIPTEYNQMIERMKTDDSLFNKYYENHNRRSIYDGRAPCNDQQCRNGYLCDARQFHQTQQLCTDLEGGIQKPEPKKNKYSARFATSNERRRGKEECKI.

The N-terminal stretch at 1 to 17 (MLLGLLVLSLAFQGTLA) is a signal peptide. Residues 18-101 (VTECEECKSI…LMKNDCGDFV (84 aa)) enclose the Saposin B-type domain. Cystine bridges form between Cys-21/Cys-97, Cys-24/Cys-89, and Cys-52/Cys-63. Residue Asn-109 is glycosylated (N-linked (GlcNAc...) asparagine). Residues Asp-139 and His-141 each coordinate Zn(2+). Cystine bridges form between Cys-154-Cys-159 and Cys-160-Cys-188. Asp-217 contributes to the Zn(2+) binding site. A glycan (N-linked (GlcNAc...) asparagine) is linked at Asn-237. Asn-257 is a binding site for Zn(2+). Residue Asn-334 is glycosylated (N-linked (GlcNAc...) asparagine). The Zn(2+) site is built by His-364, His-398, and His-400. N-linked (GlcNAc...) asparagine glycosylation occurs at Asn-463. 2 disulfide bridges follow: Cys-530–Cys-535 and Cys-541–Cys-553. The disordered stretch occupies residues 562-589 (KPEPKKNKYSARFATSNERRRGKEECKI). The segment covering 578–589 (NERRRGKEECKI) has biased composition (basic and acidic residues).

It belongs to the acid sphingomyelinase family. The cofactor is Zn(2+).

The protein resides in the secreted. It carries out the reaction an N-(acyl)-sphingosylphosphocholine + H2O = an N-acyl-sphingoid base + phosphocholine + H(+). It catalyses the reaction a sphingomyelin + H2O = phosphocholine + an N-acylsphing-4-enine + H(+). The enzyme catalyses an N-acyl-15-methylhexadecasphing-4-enine-1-phosphocholine + H2O = an N-acyl-15-methylhexadecasphing-4-enine + phosphocholine + H(+). It participates in lipid metabolism; sphingolipid metabolism. Its function is as follows. Converts sphingomyelin to ceramide (N-acyl-sphingoid base) and phosphocholine. C.elegans contain specific sphingoid bases, which are unique or different in structure compared to the sphingoid bases found in other animals. Two examples of these distinctive compounds are: 15-methylhexadecasphinganine and 15-methylhexadecasphing-4-enine. In Caenorhabditis elegans, this protein is Putative sphingomyelin phosphodiesterase asm-3 (asm-3).